A 179-amino-acid chain; its full sequence is Large ribosomal subunit protein uL6 (179 aa).

This sequence belongs to the universal ribosomal protein uL6 family. In terms of assembly, part of the 50S ribosomal subunit.

This protein binds to the 23S rRNA, and is important in its secondary structure. It is located near the subunit interface in the base of the L7/L12 stalk, and near the tRNA binding site of the peptidyltransferase center. The chain is Large ribosomal subunit protein uL6 from Prochlorococcus marinus (strain NATL2A).